The following is a 347-amino-acid chain: Secretory carrier-associated membrane protein 3 (347 aa).

Positions 1-88 (MAQSRDGGNP…EPKNYGSYST (88 aa)) are disordered. The Cytoplasmic segment spans residues 1–170 (MAQSRDGGNP…QKTVSTMYYL (170 aa)). Position 32 is a phosphoserine (serine 32). The residue at position 37 (threonine 37) is a Phosphothreonine. Phosphotyrosine is present on residues tyrosine 41 and tyrosine 53. Residues 49 to 66 (PPPAYEPPAPAPLPPPSA) show a composition bias toward pro residues. 2 positions are modified to phosphoserine: serine 72 and serine 76. A Phosphotyrosine modification is found at tyrosine 83. The residue at position 85 (serine 85) is a Phosphoserine. 4 helical membrane passes run 171 to 191 (WMCS…SFCV), 197 to 217 (AGFG…FVCW), 247 to 267 (FVLQ…SALV), and 277 to 297 (VLML…IVML). At 298 to 347 (KRIHSLYRRTGASFQKAQQEFAAGVFSNPAVRTAAANAAAGAAENAFRAP) the chain is on the cytoplasmic side. Lysine 313 is covalently cross-linked (Glycyl lysine isopeptide (Lys-Gly) (interchain with G-Cter in SUMO1)).

This sequence belongs to the SCAMP family. Interacts with NEDD4, NEDD4L and TSG101. Interacts with RNF126. In terms of processing, monoubiquitinated. Widely expressed, with highest expression in heart and skeletal muscle.

Its subcellular location is the membrane. Functionally, functions in post-Golgi recycling pathways. Acts as a recycling carrier to the cell surface. This is Secretory carrier-associated membrane protein 3 (SCAMP3) from Homo sapiens (Human).